The following is a 239-amino-acid chain: LexA repressor (239 aa).

A DNA-binding region (H-T-H motif) is located at residues 26-46 (FDEMKDALDLASKSGIHRLIT). Residues serine 159 and lysine 197 each act as for autocatalytic cleavage activity in the active site.

It belongs to the peptidase S24 family. As to quaternary structure, homodimer.

It catalyses the reaction Hydrolysis of Ala-|-Gly bond in repressor LexA.. Represses a number of genes involved in the response to DNA damage (SOS response), including recA and lexA. In the presence of single-stranded DNA, RecA interacts with LexA causing an autocatalytic cleavage which disrupts the DNA-binding part of LexA, leading to derepression of the SOS regulon and eventually DNA repair. The sequence is that of LexA repressor from Rhizobium etli (strain CIAT 652).